The following is a 239-amino-acid chain: Pyridoxine 5'-phosphate synthase (239 aa).

A 3-amino-2-oxopropyl phosphate-binding site is contributed by asparagine 7. A 1-deoxy-D-xylulose 5-phosphate-binding site is contributed by aspartate 9–histidine 10. Residue arginine 18 participates in 3-amino-2-oxopropyl phosphate binding. Histidine 43 (proton acceptor) is an active-site residue. 1-deoxy-D-xylulose 5-phosphate-binding residues include arginine 45 and histidine 50. Glutamate 70 acts as the Proton acceptor in catalysis. Threonine 100 is a binding site for 1-deoxy-D-xylulose 5-phosphate. Histidine 191 serves as the catalytic Proton donor. 3-amino-2-oxopropyl phosphate is bound by residues glycine 192 and glycine 213–histidine 214.

This sequence belongs to the PNP synthase family. In terms of assembly, homooctamer; tetramer of dimers.

It is found in the cytoplasm. The enzyme catalyses 3-amino-2-oxopropyl phosphate + 1-deoxy-D-xylulose 5-phosphate = pyridoxine 5'-phosphate + phosphate + 2 H2O + H(+). Its pathway is cofactor biosynthesis; pyridoxine 5'-phosphate biosynthesis; pyridoxine 5'-phosphate from D-erythrose 4-phosphate: step 5/5. Its function is as follows. Catalyzes the complicated ring closure reaction between the two acyclic compounds 1-deoxy-D-xylulose-5-phosphate (DXP) and 3-amino-2-oxopropyl phosphate (1-amino-acetone-3-phosphate or AAP) to form pyridoxine 5'-phosphate (PNP) and inorganic phosphate. This is Pyridoxine 5'-phosphate synthase from Geobacter sulfurreducens (strain ATCC 51573 / DSM 12127 / PCA).